Here is a 661-residue protein sequence, read N- to C-terminus: UvrABC system protein B (661 aa).

Residues 25–182 form the Helicase ATP-binding domain; sequence KGLNNKKRSQ…NDLVNLQYER (158 aa). 38 to 45 is a binding site for ATP; it reads GITGSGKT. Positions 91–114 match the Beta-hairpin motif; the sequence is YYDYYQPEAYIPKTDVFIEKDSSI. A Helicase C-terminal domain is found at 430–592; the sequence is QVEDLVGEIQ…IIPKTINRTI (163 aa). One can recognise a UVR domain in the interval 621-656; the sequence is KAHIDKLRKEMLKAASNLEFEQAAKLRDQLKTLEEA.

Belongs to the UvrB family. In terms of assembly, forms a heterotetramer with UvrA during the search for lesions. Interacts with UvrC in an incision complex.

The protein resides in the cytoplasm. Functionally, the UvrABC repair system catalyzes the recognition and processing of DNA lesions. A damage recognition complex composed of 2 UvrA and 2 UvrB subunits scans DNA for abnormalities. Upon binding of the UvrA(2)B(2) complex to a putative damaged site, the DNA wraps around one UvrB monomer. DNA wrap is dependent on ATP binding by UvrB and probably causes local melting of the DNA helix, facilitating insertion of UvrB beta-hairpin between the DNA strands. Then UvrB probes one DNA strand for the presence of a lesion. If a lesion is found the UvrA subunits dissociate and the UvrB-DNA preincision complex is formed. This complex is subsequently bound by UvrC and the second UvrB is released. If no lesion is found, the DNA wraps around the other UvrB subunit that will check the other stand for damage. The chain is UvrABC system protein B from Rickettsia bellii (strain OSU 85-389).